The sequence spans 93 residues: Cobalt transport protein CbiN (93 aa).

2 consecutive transmembrane segments (helical) span residues 5-25 and 63-83; these read LMLLAMVVALVILPFFINHGG and LLFTLQGSLGAAVIFYILGYC.

This sequence belongs to the CbiN family. Forms an energy-coupling factor (ECF) transporter complex composed of an ATP-binding protein (A component, CbiO), a transmembrane protein (T component, CbiQ) and 2 possible substrate-capture proteins (S components, CbiM and CbiN) of unknown stoichimetry.

Its subcellular location is the cell inner membrane. It functions in the pathway cofactor biosynthesis; adenosylcobalamin biosynthesis. Part of the energy-coupling factor (ECF) transporter complex CbiMNOQ involved in cobalt import. This chain is Cobalt transport protein CbiN, found in Salmonella newport (strain SL254).